The sequence spans 693 residues: Elongation factor G (693 aa).

The region spanning Glu-8–Leu-282 is the tr-type G domain. Residues Ala-17–Thr-24, Asp-81–His-85, and Asn-135–Asp-138 contribute to the GTP site.

This sequence belongs to the TRAFAC class translation factor GTPase superfamily. Classic translation factor GTPase family. EF-G/EF-2 subfamily.

It is found in the cytoplasm. Functionally, catalyzes the GTP-dependent ribosomal translocation step during translation elongation. During this step, the ribosome changes from the pre-translocational (PRE) to the post-translocational (POST) state as the newly formed A-site-bound peptidyl-tRNA and P-site-bound deacylated tRNA move to the P and E sites, respectively. Catalyzes the coordinated movement of the two tRNA molecules, the mRNA and conformational changes in the ribosome. The polypeptide is Elongation factor G (Staphylococcus aureus (strain Newman)).